The primary structure comprises 499 residues: Replication factor C large subunit (499 aa).

Position 50-57 (50-57 (GPPGVGKT)) interacts with ATP. The disordered stretch occupies residues 428-499 (EAERRVEAAE…QATLFDFLKK (72 aa)). The segment covering 436–472 (AEEEETMEAGEPEEELEEVEEEELTEEELEEAEEEIE) has biased composition (acidic residues). Positions 473–484 (TVGKKEKPEKEK) are enriched in basic and acidic residues.

The protein belongs to the activator 1 small subunits family. RfcL subfamily. Heteromultimer composed of small subunits (RfcS) and large subunits (RfcL).

Functionally, part of the RFC clamp loader complex which loads the PCNA sliding clamp onto DNA. The chain is Replication factor C large subunit from Thermococcus kodakarensis (strain ATCC BAA-918 / JCM 12380 / KOD1) (Pyrococcus kodakaraensis (strain KOD1)).